The chain runs to 185 residues: Neuronal vesicle trafficking-associated protein 1 (185 aa).

Residues 1 to 82 lie on the Cytoplasmic side of the membrane; it reads MVKLGNNFAE…ITEGVTERFK (82 aa). A helical; Signal-anchor for type II membrane protein membrane pass occupies residues 83-103; the sequence is VSVLVLFALAFLTCVVFLVVY. Residues 104–185 lie on the Lumenal side of the membrane; the sequence is KVYKYDRACP…QETEAAEKSA (82 aa). The required for GRIP1 interaction stretch occupies residues 129-164; sequence ESYYAEQDSSAREKFYTVINHYNLAKQSITRSVSPW.

It belongs to the NSG family. In terms of assembly, forms a complex with GRIP1, GRIA2 and STX12 through direct interaction with GRIP1; controls the intracellular fate of AMPAR and the endosomal sorting of the GRIA2 subunit toward recycling and membrane targeting. Interacts with STX12. Interacts with APP; could regulate APP processing. Interacts with FAM171A1.

It is found in the membrane. Its subcellular location is the golgi apparatus. It localises to the trans-Golgi network membrane. The protein localises to the endosome membrane. The protein resides in the cell projection. It is found in the dendrite. Its subcellular location is the early endosome membrane. It localises to the late endosome membrane. The protein localises to the lysosome lumen. The protein resides in the recycling endosome membrane. It is found in the cytoplasmic vesicle membrane. Its subcellular location is the golgi stack membrane. It localises to the endosome. The protein localises to the multivesicular body membrane. The protein resides in the endoplasmic reticulum membrane. In terms of biological role, plays a role in the recycling mechanism in neurons of multiple receptors, including AMPAR, APP and L1CAM and acts at the level of early endosomes to promote sorting of receptors toward a recycling pathway. Regulates sorting and recycling of GRIA2 through interaction with GRIP1 and then contributes to the regulation of synaptic transmission and plasticity by affecting the recycling and targeting of AMPA receptors to the synapse. Is required for faithful sorting of L1CAM to axons by facilitating trafficking from somatodendritic early endosome or the recycling endosome. In an other hand, induces apoptosis via the activation of CASP3 in response to DNA damage. This chain is Neuronal vesicle trafficking-associated protein 1, found in Macaca fascicularis (Crab-eating macaque).